The primary structure comprises 445 residues: MSMTPREIVHELNRHIIGQDDAKRAVAIALRNRWRRMQLHEELRVEVTPKNILMIGPTGVGKTEIARRLAKLANAPFIKVEATKFTEVGYVGRDVESIIRDLADAAIKLLREQEIIKVRHRAEDAAEDRILDALLPPARVGFNEDPAQSNDSNTRQLFRKRLREGQLDDKEIEIEINEAVGVDISAPPGMEEMTNQLQSLFANMGKGKTKSRKLKVKDALKLVREEEAGRLVNDEELKAKALEAVEQHGIVFIDEIDKVAKRGNSGGVDVSREGVQRDLLPLIEGCTVNTKLGMVKTDHILFIASGAFHLSKPSDLVPELQGRLPIRVELKALSPQDFERILSEPHASLTEQYRELLKTEGLKIEFKPEGIKRLAEIAWQVNEKTENIGARRLHTLLERLLEEVSFSAGDLAISPDAAPIEIDAEYVNSHLGDLAENEDLSRYIL.

ATP-binding positions include isoleucine 17, 59-64, aspartate 254, glutamate 319, and arginine 391; that span reads GVGKTE.

The protein belongs to the ClpX chaperone family. HslU subfamily. In terms of assembly, a double ring-shaped homohexamer of HslV is capped on each side by a ring-shaped HslU homohexamer. The assembly of the HslU/HslV complex is dependent on binding of ATP.

Its subcellular location is the cytoplasm. In terms of biological role, ATPase subunit of a proteasome-like degradation complex; this subunit has chaperone activity. The binding of ATP and its subsequent hydrolysis by HslU are essential for unfolding of protein substrates subsequently hydrolyzed by HslV. HslU recognizes the N-terminal part of its protein substrates and unfolds these before they are guided to HslV for hydrolysis. The sequence is that of ATP-dependent protease ATPase subunit HslU from Pseudomonas savastanoi pv. phaseolicola (strain 1448A / Race 6) (Pseudomonas syringae pv. phaseolicola (strain 1448A / Race 6)).